A 330-amino-acid chain; its full sequence is MMTNAAQITKQRNSGKRHRACERCREQFELNEPYFLLGASSWHMRCFLCAQCMDPLVGTTYFQFENRIYCEHDFKTLYAPVCAKCNEFVIGQVVHSSNNSYHLACFTCDECNVHLNSQIAYRYQGTILCFLCNQKKPKMRIYNCNKCKQHVDNSDLLTYQENPYHAYHFKCTTCKKVLESDARTIKDDLFCPRCFDFKCEVCFDCKKVIDPQVEQSIFTMNKHWHTDHFRCATCARPFFGHEHYEKNGKAYCRDDFLELIGHHCFICDRNVGGGMVHVFGKAFCPECYRCRGCDKVLHYKDKVMELDLMPLCKKCLGNKTFQKALKYKSL.

LIM zinc-binding domains are found at residues 21–73 (CERC…CEHD), 82–132 (CAKC…CFLC), 144–194 (CNKC…CPRC), 202–255 (CFDC…CRDD), and 264–315 (CFIC…CKKC).

Expressed in neurons and intestine.

The protein resides in the cytoplasm. It is found in the nucleus. This is LIM domain-containing protein pin-2 (pin-2) from Caenorhabditis elegans.